The primary structure comprises 213 residues: tRNA (guanine-N(7)-)-methyltransferase (213 aa).

Residues E44, E69, N96, and D118 each coordinate S-adenosyl-L-methionine. D118 is a catalytic residue. K122 contributes to the substrate binding site. The tract at residues 124-129 (RHEKRR) is interaction with RNA. Residues D154 and 192–195 (TEYE) each bind substrate.

Belongs to the class I-like SAM-binding methyltransferase superfamily. TrmB family.

The enzyme catalyses guanosine(46) in tRNA + S-adenosyl-L-methionine = N(7)-methylguanosine(46) in tRNA + S-adenosyl-L-homocysteine. It functions in the pathway tRNA modification; N(7)-methylguanine-tRNA biosynthesis. Its function is as follows. Catalyzes the formation of N(7)-methylguanine at position 46 (m7G46) in tRNA. This is tRNA (guanine-N(7)-)-methyltransferase from Latilactobacillus sakei subsp. sakei (strain 23K) (Lactobacillus sakei subsp. sakei).